We begin with the raw amino-acid sequence, 70 residues long: Non-histone chromosomal protein H6 (70 aa).

The disordered stretch occupies residues 1-70; sequence MPKRKSATKG…AAGDGAGNAK (70 aa). Positions 30–45 are enriched in basic residues; that stretch reads AKPKKAAAPKKAVKGK. The span at 46 to 57 shows a compositional bias: basic and acidic residues; that stretch reads KAAENGDAKAEA.

The protein belongs to the HMGN family.

The protein resides in the nucleus. Its subcellular location is the secreted. Its function is as follows. Non-histone protein that probably binds to the inner side of nucleosomal DNA, altering the association between the DNA and the nucleosome octamer. Oncorhyncin III has antibacterial activity against Gram-positive and Gram-negative bacteria at submicromolar concentrations. The chain is Non-histone chromosomal protein H6 from Oncorhynchus mykiss (Rainbow trout).